A 300-amino-acid chain; its full sequence is Hydroxyquinol 1,2-dioxygenase (300 aa).

Fe cation-binding residues include Y167, Y200, H224, and H226.

Belongs to the intradiol ring-cleavage dioxygenase family. Requires Fe(3+) as cofactor.

The catalysed reaction is benzene-1,2,4-triol + O2 = maleylacetate + 2 H(+). The protein operates within aromatic compound metabolism. It functions in the pathway xenobiotic degradation. Its function is as follows. Involved in the degradation of para-nitrophenol (4-NP). Catalyzes the conversion of hydroxyquinol to malelylacetate. In Rhodococcus opacus (Nocardia opaca), this protein is Hydroxyquinol 1,2-dioxygenase (npcC).